The sequence spans 450 residues: Gastrin/cholecystokinin type B receptor (450 aa).

At 1–57 (MELLKLNSSVQGPGPGSGSSLCHPGVSLLNSSSAGNLSCEPPRIRGTGTRELELAIR) the chain is on the extracellular side. N-linked (GlcNAc...) asparagine glycosylation is found at Asn-7, Asn-30, and Asn-36. The helical transmembrane segment at 58 to 79 (ITLYAVIFLMSIGGNMLIIVVL) threads the bilayer. The Cytoplasmic segment spans residues 80-87 (GLSRRLRT). A helical transmembrane segment spans residues 88 to 109 (VTNAFLLSLAVSDLLLAVACMP). Residues 110-131 (FTLLPNLMGTFIFGTVICKAVS) are Extracellular-facing. A disulfide bridge connects residues Cys-127 and Cys-205. A helical membrane pass occupies residues 132–150 (YLMGVSVSVSTLNLVAIAL). Residues 151 to 170 (ERYSAICRPLQARVWQTRSH) lie on the Cytoplasmic side of the membrane. Residues 171 to 189 (AARVILATWLLSGLLMVPY) form a helical membrane-spanning segment. Topologically, residues 190-219 (PVYTVVQPVGPRVLQCMHRWPSARVRQTWS) are extracellular. The chain crosses the membrane as a helical span at residues 220–242 (VLLLMLLFFIPGVVMAVAYGLIS). At 243-336 (RELYLGLRFD…KLLAKKRVVR (94 aa)) the chain is on the cytoplasmic side. The segment at 258–277 (DTQSRVRNQGGLPGGTAPGP) is disordered. The helical transmembrane segment at 337 to 358 (MLLVIVLLFFLCWLPIYSANTW) threads the bilayer. Topologically, residues 359-376 (CAFDGPGAHRALSGAPIS) are extracellular. The chain crosses the membrane as a helical span at residues 377 to 397 (FIHLLSYASACVNPLVYCFMH). Residues 398 to 450 (RRFRQACLDTCARCCPRPPRARPRPLPDEDPPTPSIASLSRLSYTTISTLGPG) lie on the Cytoplasmic side of the membrane. A lipid anchor (S-palmitoyl cysteine) is attached at Cys-411.

This sequence belongs to the G-protein coupled receptor 1 family. Stomach and brain.

The protein resides in the cell membrane. In terms of biological role, receptor for gastrin and cholecystokinin. The CCK-B receptors occur throughout the central nervous system where they modulate anxiety, analgesia, arousal, and neuroleptic activity. This receptor mediates its action by association with G proteins that activate a phosphatidylinositol-calcium second messenger system. This is Gastrin/cholecystokinin type B receptor (CCKBR) from Mastomys natalensis (African soft-furred rat).